Reading from the N-terminus, the 276-residue chain is Rhomboid protease GlpG (276 aa).

A run of 6 helical transmembrane segments spans residues 94-114, 142-162, 169-189, 192-212, 229-249, and 250-270; these read GPVTWIVMLACVLVYIAMSLI, IFMHFSLMHILFNLLWWWYLG, LGSGKLIVITVISALLSGYVQ, FSGPWFGGLSGVVYALMGYVW, LIIFALLWIVAGWFDWFGMSM, and ANGAHIAGLIVGLAMAFVDTL. The Nucleophile role is filled by serine 201. Residue histidine 254 is part of the active site.

This sequence belongs to the peptidase S54 family.

It localises to the cell inner membrane. It carries out the reaction Cleaves type-1 transmembrane domains using a catalytic dyad composed of serine and histidine that are contributed by different transmembrane domains.. Its function is as follows. Rhomboid-type serine protease that catalyzes intramembrane proteolysis. The sequence is that of Rhomboid protease GlpG from Salmonella dublin (strain CT_02021853).